The following is a 401-amino-acid chain: Argininosuccinate synthase (401 aa).

Ala10 to Ser18 provides a ligand contact to ATP. Tyr89 lines the L-citrulline pocket. Residue Gly119 coordinates ATP. Residues Thr121, Asn125, and Asp126 each coordinate L-aspartate. An L-citrulline-binding site is contributed by Asn125. Positions 129, 177, 186, 262, and 274 each coordinate L-citrulline.

It belongs to the argininosuccinate synthase family. Type 1 subfamily. Homotetramer.

The protein localises to the cytoplasm. The catalysed reaction is L-citrulline + L-aspartate + ATP = 2-(N(omega)-L-arginino)succinate + AMP + diphosphate + H(+). Its pathway is amino-acid biosynthesis; L-arginine biosynthesis; L-arginine from L-ornithine and carbamoyl phosphate: step 2/3. This Thermosynechococcus vestitus (strain NIES-2133 / IAM M-273 / BP-1) protein is Argininosuccinate synthase.